The primary structure comprises 954 residues: Endogenous retrovirus group K member 25 Pol protein (954 aa).

One can recognise a Reverse transcriptase domain in the interval Leu57 to Ile245. The LPQG signature appears at Leu161–Gly164. Positions Tyr195 to Asp198 match the YXDD motif. The RNase H type-1 domain occupies Leu460–Ile588. Residues Asp469, Glu497, Asp515, and Asp580 each contribute to the Mg(2+) site. The Integrase-type zinc-finger motif lies at Ser585 to Gln626. Residues His594, His598, Cys622, and Cys625 each contribute to the Zn(2+) site. In terms of domain architecture, Integrase catalytic spans Arg640–Lys801. A DNA-binding region (integrase-type) is located at residues Lys809 to Glu857. Residues Ala862 to Val888 are disordered. Residues Ser867–Asp879 show a composition bias toward polar residues.

The protein belongs to the beta type-B retroviral polymerase family. HERV class-II K(HML-2) pol subfamily.

The enzyme catalyses DNA(n) + a 2'-deoxyribonucleoside 5'-triphosphate = DNA(n+1) + diphosphate. It carries out the reaction Endonucleolytic cleavage to 5'-phosphomonoester.. Functionally, early post-infection, the reverse transcriptase converts the viral RNA genome into double-stranded viral DNA. The RNase H domain of the reverse transcriptase performs two functions. It degrades the RNA template and specifically removes the RNA primer from the RNA/DNA hybrid. Following nuclear import, the integrase catalyzes the insertion of the linear, double-stranded viral DNA into the host cell chromosome. Endogenous Pol proteins may have kept, lost or modified their original function during evolution. This is Endogenous retrovirus group K member 25 Pol protein (ERVK-25) from Homo sapiens (Human).